We begin with the raw amino-acid sequence, 247 residues long: Adenosylcobinamide-GDP ribazoletransferase (247 aa).

6 helical membrane-spanning segments follow: residues I31 to I51, L55 to L75, I109 to I129, L135 to T155, V183 to I203, and A227 to V247.

This sequence belongs to the CobS family. Requires Mg(2+) as cofactor.

Its subcellular location is the cell inner membrane. It carries out the reaction alpha-ribazole + adenosylcob(III)inamide-GDP = adenosylcob(III)alamin + GMP + H(+). The catalysed reaction is alpha-ribazole 5'-phosphate + adenosylcob(III)inamide-GDP = adenosylcob(III)alamin 5'-phosphate + GMP + H(+). It functions in the pathway cofactor biosynthesis; adenosylcobalamin biosynthesis; adenosylcobalamin from cob(II)yrinate a,c-diamide: step 7/7. Functionally, joins adenosylcobinamide-GDP and alpha-ribazole to generate adenosylcobalamin (Ado-cobalamin). Also synthesizes adenosylcobalamin 5'-phosphate from adenosylcobinamide-GDP and alpha-ribazole 5'-phosphate. In Acinetobacter baumannii (strain ATCC 17978 / DSM 105126 / CIP 53.77 / LMG 1025 / NCDC KC755 / 5377), this protein is Adenosylcobinamide-GDP ribazoletransferase.